Consider the following 181-residue polypeptide: Adenine phosphoribosyltransferase (181 aa).

This sequence belongs to the purine/pyrimidine phosphoribosyltransferase family. Homodimer.

Its subcellular location is the cytoplasm. The enzyme catalyses AMP + diphosphate = 5-phospho-alpha-D-ribose 1-diphosphate + adenine. Its pathway is purine metabolism; AMP biosynthesis via salvage pathway; AMP from adenine: step 1/1. Its function is as follows. Catalyzes a salvage reaction resulting in the formation of AMP, that is energically less costly than de novo synthesis. This chain is Adenine phosphoribosyltransferase, found in Vibrio cholerae serotype O1 (strain ATCC 39541 / Classical Ogawa 395 / O395).